The chain runs to 227 residues: Probable methylthioribulose-1-phosphate dehydratase (227 aa).

Substrate is bound at residue C87. 2 residues coordinate Zn(2+): H105 and H107. E129 functions as the Proton donor/acceptor in the catalytic mechanism. H185 contacts Zn(2+).

This sequence belongs to the aldolase class II family. MtnB subfamily. Zn(2+) is required as a cofactor.

The protein localises to the cytoplasm. It catalyses the reaction 5-(methylsulfanyl)-D-ribulose 1-phosphate = 5-methylsulfanyl-2,3-dioxopentyl phosphate + H2O. It participates in amino-acid biosynthesis; L-methionine biosynthesis via salvage pathway; L-methionine from S-methyl-5-thio-alpha-D-ribose 1-phosphate: step 2/6. Functionally, catalyzes the dehydration of methylthioribulose-1-phosphate (MTRu-1-P) into 2,3-diketo-5-methylthiopentyl-1-phosphate (DK-MTP-1-P). The protein is Probable methylthioribulose-1-phosphate dehydratase of Drosophila ananassae (Fruit fly).